Here is a 487-residue protein sequence, read N- to C-terminus: uncharacterized protein (487 aa).

ABC transporter domains lie at 5 to 249 and 265 to 487; these read VKFA…IPVK and ISME…VIHA. 297–304 contributes to the ATP binding site; that stretch reads GSNGSGKT.

The protein belongs to the ABC transporter superfamily.

It localises to the mitochondrion. This is an uncharacterized protein from Schizosaccharomyces pombe (strain 972 / ATCC 24843) (Fission yeast).